Here is a 188-residue protein sequence, read N- to C-terminus: Elongation factor P (188 aa).

N6-(3,6-diaminohexanoyl)-5-hydroxylysine is present on lysine 34.

Belongs to the elongation factor P family. May be beta-lysylated on the epsilon-amino group of Lys-34 by the combined action of EpmA and EpmB, and then hydroxylated on the C5 position of the same residue by EpmC (if this protein is present). Lysylation is critical for the stimulatory effect of EF-P on peptide-bond formation. The lysylation moiety may extend toward the peptidyltransferase center and stabilize the terminal 3-CCA end of the tRNA. Hydroxylation of the C5 position on Lys-34 may allow additional potential stabilizing hydrogen-bond interactions with the P-tRNA.

The protein localises to the cytoplasm. The protein operates within protein biosynthesis; polypeptide chain elongation. In terms of biological role, involved in peptide bond synthesis. Alleviates ribosome stalling that occurs when 3 or more consecutive Pro residues or the sequence PPG is present in a protein, possibly by augmenting the peptidyl transferase activity of the ribosome. Modification of Lys-34 is required for alleviation. This Hamiltonella defensa subsp. Acyrthosiphon pisum (strain 5AT) protein is Elongation factor P.